Reading from the N-terminus, the 217-residue chain is 7-cyano-7-deazaguanine synthase (217 aa).

Residue 10–20 (FSGGQDSTTCL) participates in ATP binding. 4 residues coordinate Zn(2+): Cys185, Cys194, Cys197, and Cys200.

This sequence belongs to the QueC family. As to quaternary structure, homodimer. The cofactor is Zn(2+).

The enzyme catalyses 7-carboxy-7-deazaguanine + NH4(+) + ATP = 7-cyano-7-deazaguanine + ADP + phosphate + H2O + H(+). It functions in the pathway purine metabolism; 7-cyano-7-deazaguanine biosynthesis. Its function is as follows. Catalyzes the ATP-dependent conversion of 7-carboxy-7-deazaguanine (CDG) to 7-cyano-7-deazaguanine (preQ(0)). This chain is 7-cyano-7-deazaguanine synthase, found in Streptococcus thermophilus (strain ATCC BAA-491 / LMD-9).